Reading from the N-terminus, the 91-residue chain is DNA-directed RNA polymerase subunit omega (91 aa).

It belongs to the RNA polymerase subunit omega family. In terms of assembly, the RNAP catalytic core consists of 2 alpha, 1 beta, 1 beta' and 1 omega subunit. When a sigma factor is associated with the core the holoenzyme is formed, which can initiate transcription.

It carries out the reaction RNA(n) + a ribonucleoside 5'-triphosphate = RNA(n+1) + diphosphate. Functionally, promotes RNA polymerase assembly. Latches the N- and C-terminal regions of the beta' subunit thereby facilitating its interaction with the beta and alpha subunits. The chain is DNA-directed RNA polymerase subunit omega from Yersinia enterocolitica serotype O:8 / biotype 1B (strain NCTC 13174 / 8081).